The sequence spans 707 residues: E3 ubiquitin-protein ligase MARCHF7 (707 aa).

N-acetylmethionine is present on M1. 5 disordered regions span residues 1-126 (MESK…QVPR), 157-279 (LMDY…RRTT), 294-343 (FFSR…RASE), 361-425 (SHNH…HIFR), and 444-473 (AANR…GRNT). A compositionally biased stretch (low complexity) spans 17 to 33 (SSSLSARMMSGSRGSSL). Basic and acidic residues predominate over residues 37–48 (YHSRDSSFRLDS). The segment covering 52 to 65 (STSASASASPFQSA) has biased composition (low complexity). Composition is skewed to polar residues over residues 66–83 (WYSE…SQNQ), 95–126 (SCTN…QVPR), 189–212 (NSMS…HQTI), and 254–270 (ISNS…FQES). Residues 294–303 (FFSRRSSQDS) are compositionally biased toward low complexity. Polar residues-rich tracts occupy residues 304 to 336 (LNTR…TSEV), 373 to 392 (FNQE…SLRN), and 412 to 421 (IPTSDTSSRS). Phosphoserine occurs at positions 317 and 389. Residues 444 to 470 (AANRPQASAASSSATTGGSTSDSAQGG) are compositionally biased toward low complexity. The RING-CH-type zinc finger occupies 544-614 (SEEEEGDLCR…ELCKEKLELN (71 aa)). Positions 552, 555, 570, 572, 580, 583, 604, and 607 each coordinate Zn(2+). T686 carries the phosphothreonine modification. S687 and S691 each carry phosphoserine.

It localises to the cytoplasm. The enzyme catalyses S-ubiquitinyl-[E2 ubiquitin-conjugating enzyme]-L-cysteine + [acceptor protein]-L-lysine = [E2 ubiquitin-conjugating enzyme]-L-cysteine + N(6)-ubiquitinyl-[acceptor protein]-L-lysine.. Its pathway is protein modification; protein ubiquitination. Its function is as follows. E3 ubiquitin-protein ligase which may specifically enhance the E2 activity of HIP2. E3 ubiquitin ligases accept ubiquitin from an E2 ubiquitin-conjugating enzyme in the form of a thioester and then directly transfer the ubiquitin to targeted substrates. May be involved in T-cell proliferation by regulating LIF secretion. May play a role in lysosome homeostasis. Promotes 'Lys-6', 'Lys-11' and 'Lys-63'-linked mixed polyubiquitination on ATG14 leading to the inhibition of autophagy by impairing the interaction between ATG14 and STX7. Participates in the dopamine-mediated negative regulation of the NLRP3 inflammasome by promoting its uibiquitination and subsequent degradation. This is E3 ubiquitin-protein ligase MARCHF7 (MARCHF7) from Pongo abelii (Sumatran orangutan).